Here is a 535-residue protein sequence, read N- to C-terminus: Arylsulfatase G (535 aa).

The first 18 residues, 1–18, serve as a signal peptide directing secretion; sequence MGWLFLKVLFLGVTFLGC. Asp-44, Asp-45, and Cys-84 together coordinate Ca(2+). Cys-84 serves as the catalytic Nucleophile. Residue Cys-84 is modified to 3-oxoalanine (Cys). N-linked (GlcNAc...) asparagine glycosylation is present at Asn-117. Lys-137 lines the substrate pocket. His-139 is an active-site residue. Position 162 (Ser-162) interacts with substrate. N-linked (GlcNAc...) asparagine glycosylation is present at Asn-215. Residue His-251 coordinates substrate. Ca(2+)-binding residues include Asp-302 and Asn-303. 2 N-linked (GlcNAc...) asparagine glycosylation sites follow: Asn-356 and Asn-497.

This sequence belongs to the sulfatase family. Ca(2+) is required as a cofactor. In terms of processing, N-glycosylated with both high mannose and complex type sugars. Post-translationally, the conversion to 3-oxoalanine (also known as C-formylglycine, FGly), of a serine or cysteine residue in prokaryotes and of a cysteine residue in eukaryotes, is critical for catalytic activity. The 63-kDa precursor undergoes proteolytic processing in two steps, yielding two fragments in the first step (apparent molecular masses of 44 and 18 kDa). In the second step, the 44-kDa fragment is processed further to the 34- and 10-kDa chains. The 10-kDa chain is a cleavage product of the 44-kDa fragment but linked to the 18-kDa chain through a disulfide bridge.

Its subcellular location is the lysosome. The enzyme catalyses an aryl sulfate + H2O = a phenol + sulfate + H(+). It catalyses the reaction Hydrolysis of the 3-sulfate groups of the N-sulfo-D-glucosamine 3-O-sulfate units of heparin.. Its function is as follows. Displays arylsulfatase activity with pseudosubstrates at acidic pH, such as p-nitrocatechol sulfate. Catalyzes the hydrolysis of the 3-sulfate groups of the N-sulfo-D-glucosamine 3-O-sulfate units of heparin. In Canis lupus familiaris (Dog), this protein is Arylsulfatase G (ARSG).